Here is an 861-residue protein sequence, read N- to C-terminus: Probable beta-glucosidase A (861 aa).

The first 19 residues, 1–19, serve as a signal peptide directing secretion; that stretch reads MKLGWIEVAALAAASVVSA. N-linked (GlcNAc...) asparagine glycosylation is found at N62, N212, and N253. Residue D281 is part of the active site. N-linked (GlcNAc...) asparagine glycans are attached at residues N316, N323, N355, N443, N524, N543, N565, N669, N713, and N846.

The protein belongs to the glycosyl hydrolase 3 family.

It localises to the secreted. It carries out the reaction Hydrolysis of terminal, non-reducing beta-D-glucosyl residues with release of beta-D-glucose.. The protein operates within glycan metabolism; cellulose degradation. Beta-glucosidases are one of a number of cellulolytic enzymes involved in the degradation of cellulosic biomass. Catalyzes the last step releasing glucose from the inhibitory cellobiose. In Aspergillus flavus (strain ATCC 200026 / FGSC A1120 / IAM 13836 / NRRL 3357 / JCM 12722 / SRRC 167), this protein is Probable beta-glucosidase A (bglA).